The sequence spans 496 residues: Alanine aminotransferase 1 (496 aa).

Position 2 is an N-acetylalanine (alanine 2). Threonine 22 carries the phosphothreonine modification. An N6-(pyridoxal phosphate)lysine modification is found at lysine 314.

Belongs to the class-I pyridoxal-phosphate-dependent aminotransferase family. Alanine aminotransferase subfamily. As to quaternary structure, homodimer. It depends on pyridoxal 5'-phosphate as a cofactor. In terms of tissue distribution, liver, kidney, heart, and skeletal muscles. Expressed at moderate levels in the adipose tissue.

It is found in the cytoplasm. It catalyses the reaction L-alanine + 2-oxoglutarate = pyruvate + L-glutamate. Its pathway is amino-acid degradation; L-alanine degradation via transaminase pathway; pyruvate from L-alanine: step 1/1. Functionally, catalyzes the reversible transamination between alanine and 2-oxoglutarate to form pyruvate and glutamate. Participates in cellular nitrogen metabolism and also in liver gluconeogenesis starting with precursors transported from skeletal muscles. The chain is Alanine aminotransferase 1 (GPT) from Homo sapiens (Human).